The primary structure comprises 305 residues: tRNA dimethylallyltransferase (305 aa).

Position 9–16 (9–16 (GPTASGKS)) interacts with ATP. 11-16 (TASGKS) contacts substrate. Positions 34–37 (DSKQ) are interaction with substrate tRNA.

This sequence belongs to the IPP transferase family. As to quaternary structure, monomer. Requires Mg(2+) as cofactor.

It carries out the reaction adenosine(37) in tRNA + dimethylallyl diphosphate = N(6)-dimethylallyladenosine(37) in tRNA + diphosphate. Functionally, catalyzes the transfer of a dimethylallyl group onto the adenine at position 37 in tRNAs that read codons beginning with uridine, leading to the formation of N6-(dimethylallyl)adenosine (i(6)A). The sequence is that of tRNA dimethylallyltransferase from Anaplasma marginale (strain St. Maries).